A 166-amino-acid polypeptide reads, in one-letter code: Large ribosomal subunit protein uL10 (166 aa).

It belongs to the universal ribosomal protein uL10 family. As to quaternary structure, part of the ribosomal stalk of the 50S ribosomal subunit. The N-terminus interacts with L11 and the large rRNA to form the base of the stalk. The C-terminus forms an elongated spine to which L12 dimers bind in a sequential fashion forming a multimeric L10(L12)X complex.

Functionally, forms part of the ribosomal stalk, playing a central role in the interaction of the ribosome with GTP-bound translation factors. This chain is Large ribosomal subunit protein uL10, found in Staphylococcus epidermidis (strain ATCC 35984 / DSM 28319 / BCRC 17069 / CCUG 31568 / BM 3577 / RP62A).